Consider the following 52-residue polypeptide: UPF0057 membrane protein At1g57550 (52 aa).

The next 2 membrane-spanning stretches (helical) occupy residues 4–24 (FLEV…RYGL) and 30–50 (VCLL…IYVL).

The protein belongs to the UPF0057 (PMP3) family.

Its subcellular location is the membrane. In Arabidopsis thaliana (Mouse-ear cress), this protein is UPF0057 membrane protein At1g57550.